The following is a 506-amino-acid chain: COP9 signalosome complex subunit 2 (506 aa).

Positions 252-420 (SEENWEEAQS…GTVVVESASD (169 aa)) constitute a PCI domain. Residues 482–491 (SGHRFRRGGK) are compositionally biased toward basic residues. The interval 482 to 506 (SGHRFRRGGKGSKAGGGLGMKTGLF) is disordered. Gly residues predominate over residues 492–506 (GSKAGGGLGMKTGLF).

This sequence belongs to the CSN2 family. As to quaternary structure, component of the COP9 signalosome (CSN) complex.

It localises to the cytoplasm. The protein resides in the nucleus. Its function is as follows. Component of the COP9 signalosome (CSN) complex that acts as an regulator of the ubiquitin (Ubl) conjugation pathway by mediating the deneddylation of the cullin subunit of SCF-type E3 ubiquitin-protein ligase complexes. The CSN complex seems to link protein degradation to sexual development. Required for fruit body formation. The protein is COP9 signalosome complex subunit 2 (csnB) of Emericella nidulans (strain FGSC A4 / ATCC 38163 / CBS 112.46 / NRRL 194 / M139) (Aspergillus nidulans).